Reading from the N-terminus, the 130-residue chain is Glycine cleavage system H protein (130 aa).

The Lipoyl-binding domain occupies 22–103; that stretch reads KAYIGISDCA…PYGSWIIAVE (82 aa). Lys-63 is modified (N6-lipoyllysine).

Belongs to the GcvH family. The glycine cleavage system is composed of four proteins: P, T, L and H. Requires (R)-lipoate as cofactor.

In terms of biological role, the glycine cleavage system catalyzes the degradation of glycine. The H protein shuttles the methylamine group of glycine from the P protein to the T protein. The chain is Glycine cleavage system H protein from Clostridium botulinum (strain Kyoto / Type A2).